Reading from the N-terminus, the 219-residue chain is Cell division protein B2 (219 aa).

Functionally, part of a cell division machinery. This is Cell division protein B2 from Sulfolobus acidocaldarius (strain ATCC 33909 / DSM 639 / JCM 8929 / NBRC 15157 / NCIMB 11770).